A 675-amino-acid chain; its full sequence is DNA ligase 1 (675 aa).

Residues 34–38, 83–84, and Glu114 contribute to the NAD(+) site; these read DFEYD and SL. The active-site N6-AMP-lysine intermediate is Lys116. 4 residues coordinate NAD(+): Arg137, Glu177, Lys295, and Lys319. Residues Cys413, Cys416, Cys431, and Cys436 each coordinate Zn(2+). Residues 596 to 675 enclose the BRCT domain; the sequence is NSGSALAGKT…AEFLRLLSGG (80 aa).

Belongs to the NAD-dependent DNA ligase family. LigA subfamily. Mg(2+) serves as cofactor. The cofactor is Mn(2+).

The catalysed reaction is NAD(+) + (deoxyribonucleotide)n-3'-hydroxyl + 5'-phospho-(deoxyribonucleotide)m = (deoxyribonucleotide)n+m + AMP + beta-nicotinamide D-nucleotide.. Its function is as follows. DNA ligase that catalyzes the formation of phosphodiester linkages between 5'-phosphoryl and 3'-hydroxyl groups in double-stranded DNA using NAD as a coenzyme and as the energy source for the reaction. It is essential for DNA replication and repair of damaged DNA. This Opitutus terrae (strain DSM 11246 / JCM 15787 / PB90-1) protein is DNA ligase 1.